A 160-amino-acid chain; its full sequence is Serine-protein kinase RsbW (160 aa).

Belongs to the anti-sigma-factor family.

It carries out the reaction L-seryl-[protein] + ATP = O-phospho-L-seryl-[protein] + ADP + H(+). It catalyses the reaction L-threonyl-[protein] + ATP = O-phospho-L-threonyl-[protein] + ADP + H(+). In terms of biological role, negative regulator of sigma-B activity. Phosphorylates and inactivates its specific antagonist protein, RsbV. Upon phosphorylation of RsbV, RsbW is released and binds to sigma-B, thereby blocking its ability to form an RNA polymerase holoenzyme (E-sigma-B). The polypeptide is Serine-protein kinase RsbW (Bacillus anthracis (strain A0248)).